We begin with the raw amino-acid sequence, 401 residues long: Glutamyl-tRNA reductase (401 aa).

Residues 49-52, serine 92, 97-99, and glutamine 103 each bind substrate; these read TCNR and END. Cysteine 50 acts as the Nucleophile in catalysis. 171–176 contacts NADP(+); that stretch reads GNGKMA.

Belongs to the glutamyl-tRNA reductase family. Homodimer.

The enzyme catalyses (S)-4-amino-5-oxopentanoate + tRNA(Glu) + NADP(+) = L-glutamyl-tRNA(Glu) + NADPH + H(+). It participates in porphyrin-containing compound metabolism; protoporphyrin-IX biosynthesis; 5-aminolevulinate from L-glutamyl-tRNA(Glu): step 1/2. Functionally, catalyzes the NADPH-dependent reduction of glutamyl-tRNA(Glu) to glutamate 1-semialdehyde (GSA). In Picrophilus torridus (strain ATCC 700027 / DSM 9790 / JCM 10055 / NBRC 100828 / KAW 2/3), this protein is Glutamyl-tRNA reductase.